The following is a 474-amino-acid chain: Adenosylhomocysteinase (474 aa).

The substrate site is built by Thr61, Asp136, and Glu196. Thr197 to Thr199 contacts NAD(+). Substrate contacts are provided by Lys226 and Asp230. Residues Asn231, Gly260 to Gly265, Glu283, Asn318, Ile339 to His341, and Asn384 each bind NAD(+).

Belongs to the adenosylhomocysteinase family. The cofactor is NAD(+).

It localises to the cytoplasm. It catalyses the reaction S-adenosyl-L-homocysteine + H2O = L-homocysteine + adenosine. It functions in the pathway amino-acid biosynthesis; L-homocysteine biosynthesis; L-homocysteine from S-adenosyl-L-homocysteine: step 1/1. May play a key role in the regulation of the intracellular concentration of adenosylhomocysteine. The sequence is that of Adenosylhomocysteinase from Ralstonia pickettii (strain 12J).